Reading from the N-terminus, the 448-residue chain is Delta(14)-sterol reductase ERG24 (448 aa).

Helical transmembrane passes span 18-38 (ISGA…FYLL), 75-95 (CWSA…LLPG), 108-128 (VLNY…LLLA), 157-177 (IIIC…ISFI), 251-271 (VTDS…DGVL), 279-299 (MIDI…LAWV), and 318-338 (NLGW…FYIF). NADP(+) contacts are provided by residues Lys-345, Arg-349, Leu-368, Trp-373, and 380–381 (NY). The helical transmembrane segment at 394-414 (PTGFQTPLTYFYVIYFASLLI) threads the bilayer. Residues Asp-420, 424-428 (CRAKY), and Tyr-435 each bind NADP(+).

The protein belongs to the ERG4/ERG24 family.

The protein localises to the endoplasmic reticulum membrane. The catalysed reaction is 4,4-dimethyl-5alpha-cholesta-8,24-dien-3beta-ol + NADP(+) = 4,4-dimethyl-5alpha-cholesta-8,14,24-trien-3beta-ol + NADPH + H(+). It functions in the pathway steroid biosynthesis; zymosterol biosynthesis; zymosterol from lanosterol: step 2/6. Functionally, C-14 sterol reductase; part of the third module of ergosterol biosynthesis pathway that includes the late steps of the pathway. ERG24 reduces the C14=C15 double bond of 4,4-dimethyl-cholesta-8,14,24-trienol to produce 4,4-dimethyl-cholesta-8,24-dienol. The third module or late pathway involves the ergosterol synthesis itself through consecutive reactions that mainly occur in the endoplasmic reticulum (ER) membrane. Firstly, the squalene synthase ERG9 catalyzes the condensation of 2 farnesyl pyrophosphate moieties to form squalene, which is the precursor of all steroids. Squalene synthase is crucial for balancing the incorporation of farnesyl diphosphate (FPP) into sterol and nonsterol isoprene synthesis. Secondly, the squalene epoxidase ERG1 catalyzes the stereospecific oxidation of squalene to (S)-2,3-epoxysqualene, which is considered to be a rate-limiting enzyme in steroid biosynthesis. Then, the lanosterol synthase ERG7 catalyzes the cyclization of (S)-2,3 oxidosqualene to lanosterol, a reaction that forms the sterol core. In the next steps, lanosterol is transformed to zymosterol through a complex process involving various demethylation, reduction and desaturation reactions. The lanosterol 14-alpha-demethylase ERG11 (also known as CYP51) catalyzes C14-demethylation of lanosterol to produce 4,4'-dimethyl cholesta-8,14,24-triene-3-beta-ol, which is critical for ergosterol biosynthesis. The C-14 reductase ERG24 reduces the C14=C15 double bond of 4,4-dimethyl-cholesta-8,14,24-trienol to produce 4,4-dimethyl-cholesta-8,24-dienol. 4,4-dimethyl-cholesta-8,24-dienol is substrate of the C-4 demethylation complex ERG25-ERG26-ERG27 in which ERG25 catalyzes the three-step monooxygenation required for the demethylation of 4,4-dimethyl and 4alpha-methylsterols, ERG26 catalyzes the oxidative decarboxylation that results in a reduction of the 3-beta-hydroxy group at the C-3 carbon to an oxo group, and ERG27 is responsible for the reduction of the keto group on the C-3. ERG28 has a role as a scaffold to help anchor ERG25, ERG26 and ERG27 to the endoplasmic reticulum and ERG29 regulates the activity of the iron-containing C4-methylsterol oxidase ERG25. Then, the sterol 24-C-methyltransferase ERG6 catalyzes the methyl transfer from S-adenosyl-methionine to the C-24 of zymosterol to form fecosterol. The C-8 sterol isomerase ERG2 catalyzes the reaction which results in unsaturation at C-7 in the B ring of sterols and thus converts fecosterol to episterol. The sterol-C5-desaturase ERG3 then catalyzes the introduction of a C-5 double bond in the B ring to produce 5-dehydroepisterol. The C-22 sterol desaturase ERG5 further converts 5-dehydroepisterol into ergosta-5,7,22,24(28)-tetraen-3beta-ol by forming the C-22(23) double bond in the sterol side chain. Finally, ergosta-5,7,22,24(28)-tetraen-3beta-ol is substrate of the C-24(28) sterol reductase ERG4 to produce ergosterol. The sequence is that of Delta(14)-sterol reductase ERG24 from Candida albicans (strain SC5314 / ATCC MYA-2876) (Yeast).